The chain runs to 411 residues: Adenylosuccinate synthetase (411 aa).

GTP-binding positions include 11 to 17 (GDEGKGK) and 39 to 41 (GHT). Asp-12 functions as the Proton acceptor in the catalytic mechanism. Positions 12 and 39 each coordinate Mg(2+). Residues 12 to 15 (DEGK), 37 to 40 (NAGH), Thr-121, Arg-135, Gln-215, Thr-230, and Arg-294 contribute to the IMP site. His-40 functions as the Proton donor in the catalytic mechanism. 290–296 (TTTKRPR) is a substrate binding site. GTP contacts are provided by residues Arg-296, 322-324 (KLD), and 400-402 (STS).

This sequence belongs to the adenylosuccinate synthetase family. In terms of assembly, homodimer. Requires Mg(2+) as cofactor.

Its subcellular location is the cytoplasm. It carries out the reaction IMP + L-aspartate + GTP = N(6)-(1,2-dicarboxyethyl)-AMP + GDP + phosphate + 2 H(+). It functions in the pathway purine metabolism; AMP biosynthesis via de novo pathway; AMP from IMP: step 1/2. Its function is as follows. Plays an important role in the de novo pathway of purine nucleotide biosynthesis. Catalyzes the first committed step in the biosynthesis of AMP from IMP. This is Adenylosuccinate synthetase from Helicobacter pylori (strain J99 / ATCC 700824) (Campylobacter pylori J99).